The chain runs to 611 residues: Rho GTPase-activating protein gacN (611 aa).

Residues 24–219 (KTFKKILKPG…VLIEEFHVLY (196 aa)) form the Rho-GAP domain. Positions 236–499 (IREDKRSTSE…TKLQKSSSSS (264 aa)) form a coiled coil. Residues 476–491 (NQLEKEKSKLQDELTK) show a composition bias toward basic and acidic residues. The disordered stretch occupies residues 476–550 (NQLEKEKSKL…TTPPPPLDED (75 aa)). Composition is skewed to low complexity over residues 495 to 509 (SSSS…SSSS) and 527 to 540 (TTTT…AQQP).

It is found in the cytoplasm. Functionally, rho GTPase-activating protein involved in the signal transduction pathway. The protein is Rho GTPase-activating protein gacN (gacN) of Dictyostelium discoideum (Social amoeba).